Consider the following 425-residue polypeptide: F-box/LRR-repeat protein At3g59250 (425 aa).

The F-box domain occupies 6–54 (KDKISNLPEALICHILSFLPIEDSALTSVLSKRWRYLFAFRPNLVFDDS). 5 LRR repeats span residues 86-113 (DLQV…RIES), 138-163 (MLGK…VLNN), 185-210 (CTES…KYSD), 264-293 (CLSA…TIKT), and 294-319 (NQSV…VFEG).

The chain is F-box/LRR-repeat protein At3g59250 from Arabidopsis thaliana (Mouse-ear cress).